Consider the following 587-residue polypeptide: GTPase-activating protein skywalker (587 aa).

Residues K75 and R79 each contribute to the a 1,2-diacyl-sn-glycero-3-phospho-(1D-myo-inositol) site. In terms of domain architecture, Rab-GAP TBC spans 84–275 (PINSPIRAQL…RIMDCYFHEG (192 aa)). Residues K277, R281, and 335–339 (RGLST) contribute to the a 1,2-diacyl-sn-glycero-3-phospho-(1D-myo-inositol) site. The 178-residue stretch at 408 to 585 (TWTDRQFLFT…IRVLEVYGFV (178 aa)) folds into the TLDc domain.

Detected in the larval ventral nerve cord and neuromuscular junction boutons (at protein level).

The protein localises to the cytoplasmic vesicle. Its subcellular location is the secretory vesicle. It is found in the synaptic vesicle membrane. The protein resides in the endosome membrane. GTPase-activating protein (GAP) for Rab35 which regulates synaptic vesicle (SV) protein recycling and turnover at the neuromuscular junction boutons and possibly ventral nerve cord via endosomal trafficking. Inhibits Rab35-mediated endosomal sorting which traffics old or dysfunctional SV proteins through a degradative endolysosomal route that involves the ESCRT pathway and the HOPS complex members dor, vps39 and rab7. This function is essential for preventing excessive degradation and turnover of vesicles from the readily releasable pool which leads to increased neurotransmission and eventually neurodegeneration. Preferentially binds phosphoinositides phosphorylated at the D5 position of the inositol ring, such as phosphatidylinositol 4,5-bisphosphate (PIP2) and phosphatidylinositol 3,4,5-trisphosphate (PIP3). Binding to phosphoinositides and thus membrane-association, is required for its function in regulating the turnover of synaptic-vesicle proteins. It is therefore likely that it is recruited to vesicle membranes with high phosphoinositide content and thereby selectively prevents endolysosomal degradation of these vesicles. The sequence is that of GTPase-activating protein skywalker from Drosophila melanogaster (Fruit fly).